Here is a 167-residue protein sequence, read N- to C-terminus: Ubiquitin-fold modifier-conjugating enzyme 1 (167 aa).

Cys-116 (glycyl thioester intermediate) is an active-site residue. Lys-122 participates in a covalent cross-link: Glycyl lysine isopeptide (Lys-Gly) (interchain with G-Cter in UFM1).

The protein belongs to the ubiquitin-conjugating enzyme family. UFC1 subfamily. Interacts with UBA5 (via C-terminus). Interacts with UFL1. Interacts with UFM1. Interacts with KIRREL3. Ufmylated at Lys-122. Deufmylated by UFSP1.

E2-like enzyme which specifically catalyzes the second step in ufmylation. Accepts the ubiquitin-like modifier UFM1 from the E1 enzyme UBA5 and forms an intermediate with UFM1 via a thioester linkage. Ufmylation is involved in various processes, such as ribosome recycling, response to DNA damage, interferon response or reticulophagy (also called ER-phagy). This is Ubiquitin-fold modifier-conjugating enzyme 1 from Mus musculus (Mouse).